The chain runs to 222 residues: MAAEVILLGFWPSMFGMRTMIALEEKGVKYEYREEDVINNKSPLLLEMNPIHKTIPVLIHNGKPVLESLIQIQYIDEVWSDNNSFLPSDPYHRAQALFWADFIDKKEQLYVCGRKTWATKGEELEAANKEFIEILKTLQCELGEKPYFGGDKFGFVDIVLIGFYSWFPAYQKFGNFSIEPECLKLIAWGKRCMQRESVAKALPDSEKVVGYVLQLKKLYGIE.

One can recognise a GST N-terminal domain in the interval 3–83 (AEVILLGFWP…YIDEVWSDNN (81 aa)). Glutathione-binding positions include 13–14 (SM), 40–41 (NK), 54–55 (TI), and 67–68 (ES). In terms of domain architecture, GST C-terminal spans 89–211 (DPYHRAQALF…LPDSEKVVGY (123 aa)).

This sequence belongs to the GST superfamily. Tau family.

Its subcellular location is the cytoplasm. It is found in the cytosol. The catalysed reaction is RX + glutathione = an S-substituted glutathione + a halide anion + H(+). Functionally, may be involved in the conjugation of reduced glutathione to a wide number of exogenous and endogenous hydrophobic electrophiles and have a detoxification role against certain herbicides. The polypeptide is Glutathione S-transferase U21 (GSTU21) (Arabidopsis thaliana (Mouse-ear cress)).